The following is a 535-amino-acid chain: CTP synthase (535 aa).

Residues 1-267 are amidoligase domain; it reads MTKFIFVTGG…DDIVIKRLDL (267 aa). A CTP-binding site is contributed by Ser13. Ser13 provides a ligand contact to UTP. Residue 14-19 coordinates ATP; it reads SLGKGI. Tyr54 is an L-glutamine binding site. Asp71 is an ATP binding site. Residues Asp71 and Glu141 each coordinate Mg(2+). CTP contacts are provided by residues 148 to 150, 188 to 193, and Lys224; these read DIE and KTKPTQ. UTP is bound by residues 188 to 193 and Lys224; that span reads KTKPTQ. 240–242 contributes to the ATP binding site; the sequence is RDA. One can recognise a Glutamine amidotransferase type-1 domain in the interval 293–535; sequence TIGLVGKYVS…VEAAYKHQNK (243 aa). Gly355 contacts L-glutamine. Residue Cys382 is the Nucleophile; for glutamine hydrolysis of the active site. L-glutamine contacts are provided by residues 383 to 386, Glu406, and Arg463; that span reads LGMQ. Residues His508 and Glu510 contribute to the active site.

This sequence belongs to the CTP synthase family. As to quaternary structure, homotetramer.

The enzyme catalyses UTP + L-glutamine + ATP + H2O = CTP + L-glutamate + ADP + phosphate + 2 H(+). The catalysed reaction is L-glutamine + H2O = L-glutamate + NH4(+). It carries out the reaction UTP + NH4(+) + ATP = CTP + ADP + phosphate + 2 H(+). Its pathway is pyrimidine metabolism; CTP biosynthesis via de novo pathway; CTP from UDP: step 2/2. Its activity is regulated as follows. Allosterically activated by GTP, when glutamine is the substrate; GTP has no effect on the reaction when ammonia is the substrate. The allosteric effector GTP functions by stabilizing the protein conformation that binds the tetrahedral intermediate(s) formed during glutamine hydrolysis. Inhibited by the product CTP, via allosteric rather than competitive inhibition. Its function is as follows. Catalyzes the ATP-dependent amination of UTP to CTP with either L-glutamine or ammonia as the source of nitrogen. Regulates intracellular CTP levels through interactions with the four ribonucleotide triphosphates. This is CTP synthase from Staphylococcus haemolyticus (strain JCSC1435).